A 166-amino-acid polypeptide reads, in one-letter code: Vasopressin-neurophysin 2-copeptin (166 aa).

A signal peptide spans 1–19 (MPDATLPACFLGLLALTSA). Cysteines 20 and 25 form a disulfide. Gly28 is modified (glycine amide). 7 cysteine pairs are disulfide-bonded: Cys41-Cys85, Cys44-Cys58, Cys52-Cys75, Cys59-Cys65, Cys92-Cys104, Cys98-Cys116, and Cys105-Cys110. Asn133 is a glycosylation site (N-linked (GlcNAc...) asparagine).

It belongs to the vasopressin/oxytocin family. Interacts with vasopressin receptors V1bR/AVPR1B (Ki=85 pM), V1aR/AVPR1A (Ki=0.6 nM) and V2R/AVPR2 (Ki=4.9 nM). Interacts with oxytocin receptor (OXTR) (Ki=110 nM). Post-translationally, a shorter neurophysin molecule (32-123) is called neurophysin-I and is derived from the complete protein (called neurophysin III) by proteolytic degradation (in vivo or after extraction).

Its subcellular location is the secreted. In terms of biological role, neurophysin 2 specifically binds vasopressin. Its function is as follows. Vasopressin has a direct antidiuretic action on the kidney, it also causes vasoconstriction of the peripheral vessels. Acts by binding to vasopressin receptors (V1bR/AVPR1B, V1aR/AVPR1A, and V2R/AVPR2). The polypeptide is Vasopressin-neurophysin 2-copeptin (AVP) (Sus scrofa (Pig)).